Reading from the N-terminus, the 131-residue chain is Holo-[acyl-carrier-protein] synthase (131 aa).

Residues aspartate 8 and glutamate 59 each contribute to the Mg(2+) site.

Belongs to the P-Pant transferase superfamily. AcpS family. Mg(2+) is required as a cofactor.

It localises to the cytoplasm. It carries out the reaction apo-[ACP] + CoA = holo-[ACP] + adenosine 3',5'-bisphosphate + H(+). Transfers the 4'-phosphopantetheine moiety from coenzyme A to a Ser of acyl-carrier-protein. This Rickettsia rickettsii (strain Iowa) protein is Holo-[acyl-carrier-protein] synthase.